We begin with the raw amino-acid sequence, 144 residues long: ATP synthase epsilon chain (144 aa).

The protein belongs to the ATPase epsilon chain family. In terms of assembly, F-type ATPases have 2 components, CF(1) - the catalytic core - and CF(0) - the membrane proton channel. CF(1) has five subunits: alpha(3), beta(3), gamma(1), delta(1), epsilon(1). CF(0) has three main subunits: a, b and c.

It is found in the cell inner membrane. Its function is as follows. Produces ATP from ADP in the presence of a proton gradient across the membrane. This chain is ATP synthase epsilon chain, found in Hydrogenovibrio crunogenus (strain DSM 25203 / XCL-2) (Thiomicrospira crunogena).